Reading from the N-terminus, the 262-residue chain is Ornithine carbamoyltransferase (262 aa).

Carbamoyl phosphate is bound by residues S3–R7, Q30, R54, and H81–Q84. Residues N114, D178, and S182–M183 contribute to the L-ornithine site. Carbamoyl phosphate contacts are provided by residues H219–P222 and T247.

Belongs to the aspartate/ornithine carbamoyltransferase superfamily. OTCase family.

It localises to the cytoplasm. It carries out the reaction carbamoyl phosphate + L-ornithine = L-citrulline + phosphate + H(+). Its pathway is amino-acid biosynthesis; L-arginine biosynthesis; L-arginine from L-ornithine and carbamoyl phosphate: step 1/3. The protein operates within amino-acid degradation; L-arginine degradation via ADI pathway; carbamoyl phosphate from L-arginine: step 2/2. Functionally, reversibly catalyzes the transfer of the carbamoyl group from carbamoyl phosphate (CP) to the N(epsilon) atom of ornithine (ORN) to produce L-citrulline. This chain is Ornithine carbamoyltransferase (argF), found in Neisseria meningitidis.